A 460-amino-acid chain; its full sequence is Cysteine--tRNA ligase (460 aa).

Cys28 serves as a coordination point for Zn(2+). Residues 30-40 (MTVYDYCHLGH) carry the 'HIGH' region motif. Zn(2+)-binding residues include Cys209, His234, and Glu238. The 'KMSKS' region motif lies at 266 to 270 (KMSKS). Lys269 lines the ATP pocket.

Belongs to the class-I aminoacyl-tRNA synthetase family. As to quaternary structure, monomer. The cofactor is Zn(2+).

Its subcellular location is the cytoplasm. It carries out the reaction tRNA(Cys) + L-cysteine + ATP = L-cysteinyl-tRNA(Cys) + AMP + diphosphate. This Pseudomonas syringae pv. tomato (strain ATCC BAA-871 / DC3000) protein is Cysteine--tRNA ligase.